We begin with the raw amino-acid sequence, 415 residues long: Phosphoglycerate kinase (415 aa).

Residues 24 to 26 (DLN), Arg43, 66 to 69 (HLGR), Arg125, and Arg165 each bind substrate. Residues Lys215, Gly303, Glu334, and 363–366 (GGDS) each bind ATP.

Belongs to the phosphoglycerate kinase family. As to quaternary structure, monomer.

The protein localises to the cytoplasm. The enzyme catalyses (2R)-3-phosphoglycerate + ATP = (2R)-3-phospho-glyceroyl phosphate + ADP. Its pathway is carbohydrate degradation; glycolysis; pyruvate from D-glyceraldehyde 3-phosphate: step 2/5. The sequence is that of Phosphoglycerate kinase from Mycobacterium avium (strain 104).